A 284-amino-acid polypeptide reads, in one-letter code: 4-diphosphocytidyl-2-C-methyl-D-erythritol kinase (284 aa).

K9 is a catalytic residue. 92 to 102 (PMGGGIGGGSS) is an ATP binding site. The active site involves D134.

Belongs to the GHMP kinase family. IspE subfamily.

The catalysed reaction is 4-CDP-2-C-methyl-D-erythritol + ATP = 4-CDP-2-C-methyl-D-erythritol 2-phosphate + ADP + H(+). It participates in isoprenoid biosynthesis; isopentenyl diphosphate biosynthesis via DXP pathway; isopentenyl diphosphate from 1-deoxy-D-xylulose 5-phosphate: step 3/6. In terms of biological role, catalyzes the phosphorylation of the position 2 hydroxy group of 4-diphosphocytidyl-2C-methyl-D-erythritol. The sequence is that of 4-diphosphocytidyl-2-C-methyl-D-erythritol kinase from Stutzerimonas stutzeri (strain A1501) (Pseudomonas stutzeri).